Consider the following 375-residue polypeptide: Sulfite efflux pump SSU1 (375 aa).

At 1–25 the chain is on the cytoplasmic side; the sequence is MPSGSGFHNIEEAGEKARKRDDWIA. The helical transmembrane segment at 26–46 threads the bilayer; that stretch reads ISNFHPGWFSVNMGTGITAIL. Residues 47 to 59 are Extracellular-facing; it reads LQNLPYQFPGLHY. The chain crosses the membrane as a helical span at residues 60–80; the sequence is IAVILFILNVIIFFLFLTISI. Topologically, residues 81–101 are cytoplasmic; that stretch reads TRYCLWPDKFKAMLAHPAHSM. A helical transmembrane segment spans residues 102–122; sequence LLGTFPMGFATIINCIVFICV. At 123-135 the chain is on the extracellular side; sequence PVWGEWASRFAWG. Residues 136 to 156 form a helical membrane-spanning segment; it reads LWWIDAAVSVAICYFVPFMLM. At 157–167 the chain is on the cytoplasmic side; sequence TKHTSSLETMT. The chain crosses the membrane as a helical span at residues 168–188; that stretch reads AAWLLPIVAPVVAAASGGVVA. At 189 to 200 the chain is on the extracellular side; it reads DSLQNDTHALIT. N-linked (GlcNAc...) asparagine glycosylation is present at asparagine 193. The chain crosses the membrane as a helical span at residues 201–221; the sequence is ILVCYVMWGSAVPLAMVILVI. The Cytoplasmic portion of the chain corresponds to 222–234; the sequence is YFQRLAIHKLVPR. A helical transmembrane segment spans residues 235–255; the sequence is AAIVSALLPIGPLGQGGFGLM. The Extracellular segment spans residues 256–277; that stretch reads QLGVVAKRVFPRLDFLAPIAGD. Residues 278-298 form a helical membrane-spanning segment; the sequence is IFYVMGAFIAMIMWGFGLIWL. Over 299-309 the chain is Cytoplasmic; it reads WFALASFTRGK. The helical transmembrane segment at 310–330 threads the bilayer; it reads FYFNIGWWAFTFPLGVFTTAT. The Extracellular portion of the chain corresponds to 331-343; that stretch reads TQMGKEFNSPFFD. Residues 344–364 form a helical membrane-spanning segment; sequence ILGTFFSIVVTCMWVLVFALT. The Cytoplasmic portion of the chain corresponds to 365–375; that stretch reads VYKSCTKELFR.

It belongs to the tellurite-resistance/dicarboxylate transporter (TDT) family.

The protein resides in the cell membrane. In terms of biological role, sulphite efflux pump required for the secretion of sulphite as a reducing agent. In the presence of sulphite, cystine in keratin is directly cleaved to cysteine and S-sulphocysteine, and thereby, reduced proteins become accessible to hydrolysis by a variety of secreted endo- and exoproteases. Excretion of sulphite mediated by an efflux pump also represents a detoxification pathway for dermatophytes during infection of the epidermal stratum corneum, hair and nails, which are rich in cysteine. This Arthroderma benhamiae (strain ATCC MYA-4681 / CBS 112371) (Trichophyton mentagrophytes) protein is Sulfite efflux pump SSU1.